We begin with the raw amino-acid sequence, 321 residues long: Cytochrome c biogenesis protein CcsA (321 aa).

The next 6 membrane-spanning stretches (helical) occupy residues 17-37 (IISI…IVGI), 43-63 (KGII…WIYS), 143-163 (MLLS…FLVI), 225-245 (VISL…VWAN), 258-275 (ETWA…LHTR), and 287-307 (IVAS…NLLG).

Belongs to the CcmF/CycK/Ccl1/NrfE/CcsA family. In terms of assembly, may interact with Ccs1.

The protein resides in the plastid. It localises to the chloroplast thylakoid membrane. Its function is as follows. Required during biogenesis of c-type cytochromes (cytochrome c6 and cytochrome f) at the step of heme attachment. This chain is Cytochrome c biogenesis protein CcsA, found in Drimys granadensis.